We begin with the raw amino-acid sequence, 588 residues long: Proteasome-associated ATPase (588 aa).

The segment covering 1-10 (MAAHDDDMNR) has biased composition (basic and acidic residues). Residues 1-23 (MAAHDDDMNRGIRPGRGSDDPSG) are disordered. Residues 47 to 94 (RILEERIVELQTNLAGVSAQNERLANTLREARDQIVALKEEVDRLAQP) adopt a coiled-coil conformation. ATP is bound at residue 276-281 (GCGKTL). Residues 587–588 (YL) are docks into pockets in the proteasome alpha-ring.

It belongs to the AAA ATPase family. As to quaternary structure, homohexamer. Assembles into a hexameric ring structure that caps the 20S proteasome core. Strongly interacts with the prokaryotic ubiquitin-like protein Pup through a hydrophobic interface; the interacting region of ARC lies in its N-terminal coiled-coil domain. There is one Pup binding site per ARC hexamer ring. Upon ATP-binding, the C-terminus of ARC interacts with the alpha-rings of the proteasome core, possibly by binding to the intersubunit pockets.

Its pathway is protein degradation; proteasomal Pup-dependent pathway. Functionally, ATPase which is responsible for recognizing, binding, unfolding and translocation of pupylated proteins into the bacterial 20S proteasome core particle. May be essential for opening the gate of the 20S proteasome via an interaction with its C-terminus, thereby allowing substrate entry and access to the site of proteolysis. Thus, the C-termini of the proteasomal ATPase may function like a 'key in a lock' to induce gate opening and therefore regulate proteolysis. The chain is Proteasome-associated ATPase from Streptomyces scabiei (strain 87.22).